The sequence spans 177 residues: Large ribosomal subunit protein uL6 (177 aa).

It belongs to the universal ribosomal protein uL6 family. In terms of assembly, part of the 50S ribosomal subunit.

Functionally, this protein binds to the 23S rRNA, and is important in its secondary structure. It is located near the subunit interface in the base of the L7/L12 stalk, and near the tRNA binding site of the peptidyltransferase center. This chain is Large ribosomal subunit protein uL6, found in Haemophilus influenzae (strain 86-028NP).